Reading from the N-terminus, the 209-residue chain is Uracil phosphoribosyltransferase (209 aa).

5-phospho-alpha-D-ribose 1-diphosphate is bound by residues Arg79, Arg104, and 131–139; that span reads DPMLATGGS. Uracil contacts are provided by residues Ile194 and 199 to 201; that span reads GDA. Asp200 contacts 5-phospho-alpha-D-ribose 1-diphosphate.

Belongs to the UPRTase family. Mg(2+) is required as a cofactor.

The enzyme catalyses UMP + diphosphate = 5-phospho-alpha-D-ribose 1-diphosphate + uracil. It participates in pyrimidine metabolism; UMP biosynthesis via salvage pathway; UMP from uracil: step 1/1. Its activity is regulated as follows. Allosterically activated by GTP. In terms of biological role, catalyzes the conversion of uracil and 5-phospho-alpha-D-ribose 1-diphosphate (PRPP) to UMP and diphosphate. This Streptococcus pneumoniae serotype 4 (strain ATCC BAA-334 / TIGR4) protein is Uracil phosphoribosyltransferase.